Consider the following 723-residue polypeptide: Capsid protein (723 aa).

Residues 658–679 (QATPPPFKKPRTEDQEENPEET) are disordered.

This sequence belongs to the anelloviridae capsid protein family.

It localises to the virion. Functionally, self assemble to form an icosahedral capsid. The protein is Capsid protein of Torque teno virus (isolate Japanese macaque/Japan/Mf-TTV9/2000) (TTV).